The primary structure comprises 467 residues: Replication factor A 51 kDa subunit (467 aa).

The segment at residues 23–105 is a DNA-binding region (OB); the sequence is WWIRARVADK…SNVNNDYELT (83 aa). The C4-type zinc-finger motif lies at 313-335; the sequence is CPTCNKKVTEEGAQGDRFRCEKC.

The protein belongs to the replication factor A protein 1 family. In terms of assembly, component of the heterotrimeric canonical replication protein A complex (RPA). The N-terminus is blocked.

The protein localises to the nucleus. Its function is as follows. As part of the heterotrimeric replication protein A complex (RPA/RP-A), binds and stabilizes single-stranded DNA intermediates, that form during DNA replication or upon DNA stress. It prevents their reannealing and in parallel, recruits and activates different proteins and complexes involved in DNA metabolism. Thereby, it plays an essential role both in DNA replication and the cellular response to DNA damage. In Crithidia fasciculata, this protein is Replication factor A 51 kDa subunit (RPA1).